We begin with the raw amino-acid sequence, 619 residues long: CLPTM1-like membrane protein cnrB (619 aa).

The tract at residues 1-21 (MNNQGGAVAANGQRPQAQQQQ) is disordered. Residues 9 to 21 (AANGQRPQAQQQQ) are compositionally biased toward low complexity. The next 6 membrane-spanning stretches (helical) occupy residues 26–46 (IMGIISTLIRFMAIYYIASFA), 324–344 (WILGLTLIVSVLHTIFEFLAF), 360–380 (LSVKTITLNCVCMGIIFLYLL), 384–404 (TSYMILASSGFGFLVEFWKLG), 445–465 (YLSWLLFPLVIGTSIYSLYYH), and 474–496 (VVSSLVRTVYTFEFIMMTPQLFI). The segment at 566 to 619 (SEEAEEVQQQDKKEIKEKVEEREEEKQEEEEEEKEKEEESTSSSKVTKRKTKKV) is disordered. A compositionally biased stretch (basic and acidic residues) spans 574 to 590 (QQDKKEIKEKVEEREEE). Residues 591–605 (KQEEEEEEKEKEEES) show a composition bias toward acidic residues.

The protein belongs to the CLPTM1 family.

The protein resides in the membrane. In Dictyostelium discoideum (Social amoeba), this protein is CLPTM1-like membrane protein cnrB (cnrB).